A 158-amino-acid polypeptide reads, in one-letter code: Low molecular weight phosphotyrosine protein phosphatase (158 aa).

Ala-2 bears the N-acetylalanine mark. Cys-13 acts as the Nucleophile in catalysis. Arg-19 is an active-site residue. Residue Asp-130 is the Proton donor of the active site. Phosphotyrosine occurs at positions 132 and 133.

The protein belongs to the low molecular weight phosphotyrosine protein phosphatase family. As to quaternary structure, interacts with EPHA2; dephosphorylates EPHA2. Interacts with EPHB1. Interacts with the SH3 domain of SPTAN1. There is no interaction observed for isoform 2. In terms of processing, phosphorylated by LCK. Phosphorylation at Tyr-132 increases its phosphatase activity.

The protein resides in the cytoplasm. The catalysed reaction is O-phospho-L-tyrosyl-[protein] + H2O = L-tyrosyl-[protein] + phosphate. It carries out the reaction a phosphate monoester + H2O = an alcohol + phosphate. With respect to regulation, inhibited by sulfhydryl reagents. Acts on tyrosine phosphorylated proteins, low-MW aryl phosphates and natural and synthetic acyl phosphates with differences in substrate specificity between isoform 1 and isoform 2. The chain is Low molecular weight phosphotyrosine protein phosphatase from Rattus norvegicus (Rat).